The following is a 187-amino-acid chain: Elongation factor P (187 aa).

It belongs to the elongation factor P family.

The protein localises to the cytoplasm. The protein operates within protein biosynthesis; polypeptide chain elongation. Its function is as follows. Involved in peptide bond synthesis. Stimulates efficient translation and peptide-bond synthesis on native or reconstituted 70S ribosomes in vitro. Probably functions indirectly by altering the affinity of the ribosome for aminoacyl-tRNA, thus increasing their reactivity as acceptors for peptidyl transferase. In Nocardioides sp. (strain ATCC BAA-499 / JS614), this protein is Elongation factor P.